The sequence spans 524 residues: Protopine 6-monooxygenase (524 aa).

3 helical membrane passes run 4-24 (LMLAYLFPISVASIIAFVFLY), 232-252 (LASLSMFSDFAPLLGFVDIFQ), and 319-339 (MIMGGTDTTAVSLTWIISLLM). A heme-binding site is contributed by Cys462.

Belongs to the cytochrome P450 family. It depends on heme as a cofactor.

The protein resides in the endoplasmic reticulum membrane. It catalyses the reaction protopine + reduced [NADPH--hemoprotein reductase] + O2 = 6-hydroxyprotopine + oxidized [NADPH--hemoprotein reductase] + H2O + H(+). Its pathway is alkaloid biosynthesis. In terms of biological role, catalyzes the conversion of protopine and allocryptopine to dihydrosanguinarine and dihydrochelerythrine, respectively, in the biosynthesis of isoquinoline alkaloid sanguinarine. In Eschscholzia californica (California poppy), this protein is Protopine 6-monooxygenase (CYP82N2v2).